A 341-amino-acid chain; its full sequence is tRNA N6-adenosine threonylcarbamoyltransferase (341 aa).

Positions 115 and 119 each coordinate Fe cation. Substrate is bound by residues 138–142, aspartate 171, glycine 184, and asparagine 276; that span reads LVSGG. Aspartate 304 contacts Fe cation.

Belongs to the KAE1 / TsaD family. Fe(2+) is required as a cofactor.

Its subcellular location is the cytoplasm. The enzyme catalyses L-threonylcarbamoyladenylate + adenosine(37) in tRNA = N(6)-L-threonylcarbamoyladenosine(37) in tRNA + AMP + H(+). Functionally, required for the formation of a threonylcarbamoyl group on adenosine at position 37 (t(6)A37) in tRNAs that read codons beginning with adenine. Is involved in the transfer of the threonylcarbamoyl moiety of threonylcarbamoyl-AMP (TC-AMP) to the N6 group of A37, together with TsaE and TsaB. TsaD likely plays a direct catalytic role in this reaction. In Stenotrophomonas maltophilia (strain R551-3), this protein is tRNA N6-adenosine threonylcarbamoyltransferase.